The sequence spans 266 residues: Probable dihydroorotate dehydrogenase B (NAD(+)), electron transfer subunit (266 aa).

The FAD-binding FR-type domain occupies 5–99 (NVPEVLEIKR…RGPYGRGFEL (95 aa)). [2Fe-2S] cluster is bound by residues Cys-217, Cys-222, Cys-225, and Cys-235.

This sequence belongs to the PyrK family. In terms of assembly, heterotetramer of 2 PyrK and 2 PyrD type B subunits. It depends on [2Fe-2S] cluster as a cofactor. The cofactor is FAD.

It functions in the pathway pyrimidine metabolism; UMP biosynthesis via de novo pathway; orotate from (S)-dihydroorotate (NAD(+) route): step 1/1. Its function is as follows. Responsible for channeling the electrons from the oxidation of dihydroorotate from the FMN redox center in the PyrD type B subunit to the ultimate electron acceptor NAD(+). This chain is Probable dihydroorotate dehydrogenase B (NAD(+)), electron transfer subunit, found in Methanothermobacter thermautotrophicus (strain ATCC 29096 / DSM 1053 / JCM 10044 / NBRC 100330 / Delta H) (Methanobacterium thermoautotrophicum).